A 473-amino-acid polypeptide reads, in one-letter code: MKTLYSLRRFYPVETLFNGTLALAGRDQETTGFAWWAGNARLINLSGKLLGAHVAHAGLIVFWAGAMNLFEVAHFVPEKPMYEQGLILLPHLATLGWGVGPGGEVIDTFPYFVSGVLHLISSAVLGFGGIYHALLGPETLEESFPFFGYVWKDRNKMTTILGIHLILLGIGAFLLVLKALYFGGVYDTWAPGGGDVRRITNLTLSPSVIFGYLLKSPFGGEGWIVSVDDLEDIIGGHVWVGAICILGGTWHILTKPFAWARRALVWSGEAYLSYSLGALSVFGFIACCFVWFNNTAYPSEFYGPTGPEASQAQAFTFLVRDQRLGANVGSAQGPTGLGKYLMRSPTGEVIFGGETMRFWDLRAPWLEPLRGPNGLDLSRLKKDIQPWQERRSAEYMTHAPLGSLNSVGGVATEINAVNYVSPRSWLATSHFVLGFFLFVGHLWHAGRARAAAAGFEKGIDRDFEPVLSMTPLN.

A propeptide spanning residues 1–14 (MKTLYSLRRFYPVE) is cleaved from the precursor. Thr-15 carries the post-translational modification N-acetylthreonine. Position 15 is a phosphothreonine (Thr-15). The next 5 helical transmembrane spans lie at 69–93 (LFEV…PHLA), 134–155 (LLGP…KDRN), 178–200 (KALY…RRIT), 255–275 (KPFA…LSYS), and 291–312 (WFNN…ASQA). [CaMn4O5] cluster is bound at residue Glu-367. A helical transmembrane segment spans residues 447-471 (RARAAAAGFEKGIDRDFEPVLSMTP).

It belongs to the PsbB/PsbC family. PsbC subfamily. In terms of assembly, PSII is composed of 1 copy each of membrane proteins PsbA, PsbB, PsbC, PsbD, PsbE, PsbF, PsbH, PsbI, PsbJ, PsbK, PsbL, PsbM, PsbT, PsbX, PsbY, PsbZ, Psb30/Ycf12, at least 3 peripheral proteins of the oxygen-evolving complex and a large number of cofactors. It forms dimeric complexes. The cofactor is Binds multiple chlorophylls and provides some of the ligands for the Ca-4Mn-5O cluster of the oxygen-evolving complex. It may also provide a ligand for a Cl- that is required for oxygen evolution. PSII binds additional chlorophylls, carotenoids and specific lipids..

The protein resides in the plastid. It localises to the chloroplast thylakoid membrane. One of the components of the core complex of photosystem II (PSII). It binds chlorophyll and helps catalyze the primary light-induced photochemical processes of PSII. PSII is a light-driven water:plastoquinone oxidoreductase, using light energy to abstract electrons from H(2)O, generating O(2) and a proton gradient subsequently used for ATP formation. The protein is Photosystem II CP43 reaction center protein of Illicium oligandrum (Star anise).